The following is an 82-amino-acid chain: DNA-directed RNA polymerase subunit omega (82 aa).

It belongs to the RNA polymerase subunit omega family. In terms of assembly, in cyanobacteria the RNAP catalytic core is composed of 2 alpha, 1 beta, 1 beta', 1 gamma and 1 omega subunit. When a sigma factor is associated with the core the holoenzyme is formed, which can initiate transcription.

The catalysed reaction is RNA(n) + a ribonucleoside 5'-triphosphate = RNA(n+1) + diphosphate. Functionally, promotes RNA polymerase assembly. Latches the N- and C-terminal regions of the beta' subunit thereby facilitating its interaction with the beta and alpha subunits. The chain is DNA-directed RNA polymerase subunit omega from Trichodesmium erythraeum (strain IMS101).